An 83-amino-acid chain; its full sequence is Antitoxin ChpS (83 aa).

Positions 3-48 (ITIKRWGNSAGMVIPNIVMKELNLQPGQSVEAQVSNNQLILTPISR) constitute a SpoVT-AbrB domain.

The protein belongs to the PemI family. As to quaternary structure, interacts with ChpB, inhibiting its endoribonuclease activity.

Functionally, antitoxin component of a type II toxin-antitoxin (TA) system. May be involved in the regulation of cell growth. It acts as a suppressor of the endoribonuclease (inhibitory function) of ChpB protein. Both ChpS and ChpB probably bind to the promoter region of the chpS-chpB operon to autoregulate their synthesis. The sequence is that of Antitoxin ChpS (chpS) from Escherichia coli (strain K12).